The chain runs to 418 residues: Probable serine hydroxymethyltransferase (418 aa).

(6S)-5,6,7,8-tetrahydrofolate is bound by residues leucine 118 and 122 to 124; that span reads GHL. Lysine 226 bears the N6-(pyridoxal phosphate)lysine mark. 351-353 is a binding site for (6S)-5,6,7,8-tetrahydrofolate; sequence SPF.

It belongs to the SHMT family. As to quaternary structure, homodimer. Pyridoxal 5'-phosphate is required as a cofactor.

The protein resides in the cytoplasm. It catalyses the reaction (6R)-5,10-methylene-5,6,7,8-tetrahydrofolate + glycine + H2O = (6S)-5,6,7,8-tetrahydrofolate + L-serine. It participates in one-carbon metabolism; tetrahydrofolate interconversion. Functionally, catalyzes the reversible interconversion of serine and glycine with tetrahydrofolate (THF) serving as the one-carbon carrier. This reaction serves as the major source of one-carbon groups required for the biosynthesis of purines, thymidylate, methionine, and other important biomolecules. This chain is Probable serine hydroxymethyltransferase, found in Mesomycoplasma hyopneumoniae (strain 232) (Mycoplasma hyopneumoniae).